The primary structure comprises 610 residues: Sodium-coupled monocarboxylate transporter 1 (610 aa).

The Extracellular segment spans residues 1–9 (MDTPRGIGT). The chain crosses the membrane as a helical span at residues 10–30 (FVVWDYVVFAGMLVISAAIGI). The Cytoplasmic segment spans residues 31-51 (YYAFAGGGQQTSKDFLMGGRR). Residues 52 to 72 (MTAVPVALSLTASFMSAVTVL) traverse the membrane as a helical segment. Residues 73–83 (GTPSEVYRFGA) are Extracellular-facing. A helical transmembrane segment spans residues 84–104 (IFSIFAFTYFFVVVISAEVFL). The Cytoplasmic portion of the chain corresponds to 105–132 (PVFYKLGITSTYEYLELRFNKCVRLCGT). A helical transmembrane segment spans residues 133–153 (VLFIVQTILYTGIVIYAPALA). Residues 154–161 (LNQVTGFD) lie on the Extracellular side of the membrane. A helical membrane pass occupies residues 162–182 (LWGAVVATGVVCTFYCTLGGL). At 183–189 (KAVIWTD) the chain is on the cytoplasmic side. Residues 190–210 (VFQVGIMVAGFASVIIQAVVM) form a helical membrane-spanning segment. Topologically, residues 211-239 (QGGISTILNDAYDGGRLNFWNFNPNPLQR) are extracellular. The helical transmembrane segment at 240–260 (HTFWTIIIGGTFTWTSIYGVN) threads the bilayer. Residues 261–279 (QSQVQRYISCKSRFQAKLS) lie on the Cytoplasmic side of the membrane. A helical membrane pass occupies residues 280–300 (LYINLVGLWAILTCSVFCGLA). The Extracellular segment spans residues 301–336 (LYSRYHDCDPWTAKKVSAPDQLMPYLVLDILQDYPG). The helical transmembrane segment at 337 to 359 (LPGLFVACAYSGTLSTVSSSINA) threads the bilayer. The Cytoplasmic segment spans residues 360–389 (LAAVTVEDLIKPYFRSLSERSLSWISQGMS). Residues 390–410 (VVYGALCIGMAALASLMGALL) traverse the membrane as a helical segment. Residues 411–415 (QAALS) lie on the Extracellular side of the membrane. A helical membrane pass occupies residues 416–436 (VFGMVGGPLMGLFALGILVPF). Residues 437–439 (ANS) lie on the Cytoplasmic side of the membrane. A helical transmembrane segment spans residues 440–460 (IGALVGLMAGFAISLWVGIGA). Residues 461–518 (QIYPPLPERTLPLHLDIQGCNSTYNETNLMTTTEMPFTTSVFQIYNVQRTPLMDNWYS) lie on the Extracellular side of the membrane. An N-linked (GlcNAc...) asparagine glycan is attached at N485. A helical membrane pass occupies residues 519-539 (LSYLYFSTVGTLVTLLVGILV). Over 540-610 (SLSTGGRKQN…QSGKSNGTRL (71 aa)) the chain is Cytoplasmic. Positions 585–610 (GGTDNPAFNHIELNSDQSGKSNGTRL) are disordered. The span at 596 to 610 (ELNSDQSGKSNGTRL) shows a compositional bias: polar residues. The PDZ-binding signature appears at 608-610 (TRL).

It belongs to the sodium:solute symporter (SSF) (TC 2.A.21) family. As to quaternary structure, interacts (via PDZ-binding motif) with PDZK1 (via PDZ domains 1 and 3); interaction increases nicotinate transport activity of SLC5A8. In terms of tissue distribution, expressed in normal thyroid, localized at the apical pole of thyroid cells facing the colloid lumen, but expression profoundly decreased in thyroid carcinomas. Expressed in normal colon but absent in colon aberrant crypt foci and colon cancers. Present in normal kidney cortex, brain, prostate, gastric mucosa and breast tissue but was significantly down-regulated in primary gliomas, gastric cancer, prostate tumors and breast tumors.

Its subcellular location is the apical cell membrane. The catalysed reaction is (S)-lactate(out) + 2 Na(+)(out) = (S)-lactate(in) + 2 Na(+)(in). The enzyme catalyses propanoate(out) + 2 Na(+)(out) = propanoate(in) + 2 Na(+)(in). It catalyses the reaction pyruvate(out) + 2 Na(+)(out) = pyruvate(in) + 2 Na(+)(in). It carries out the reaction acetate(out) + 2 Na(+)(out) = acetate(in) + 2 Na(+)(in). The catalysed reaction is butanoate(out) + 2 Na(+)(out) = butanoate(in) + 2 Na(+)(in). The enzyme catalyses nicotinate(out) + 2 Na(+)(out) = nicotinate(in) + 2 Na(+)(in). It catalyses the reaction (R)-3-hydroxybutanoate(out) + 2 Na(+)(out) = (R)-3-hydroxybutanoate(in) + 2 Na(+)(in). It carries out the reaction acetoacetate(out) + 2 Na(+)(out) = acetoacetate(in) + 2 Na(+)(in). The catalysed reaction is 4-methyl-2-oxopentanoate(out) + 2 Na(+)(out) = 4-methyl-2-oxopentanoate(in) + 2 Na(+)(in). The enzyme catalyses 5-oxo-L-proline(out) + 2 Na(+)(out) = 5-oxo-L-proline(in) + 2 Na(+)(in). It catalyses the reaction iodide(out) = iodide(in). It carries out the reaction chloride(in) = chloride(out). The catalysed reaction is nitrate(in) = nitrate(out). The enzyme catalyses bromide(in) = bromide(out). Its activity is regulated as follows. Increase of iodide influx inhibited by addition of perchlorate (NaClO(4)), a competitive inhibitor of iodide uptake catalyzed by sodium iodide symporter (NIS). Cotransport of monocarboxylates and nicotinate strongly inhibited by probenecid, nonsteroid anti-inflammatory drugs (ibuprofen, fenoprofen, ketprofen, naproxen) in a Na(+)-dependent manner or by prolonged exposure to external concentrations of monocarboxylates. In terms of biological role, acts as an electrogenic sodium (Na(+)) and chloride (Cl-)-dependent sodium-coupled solute transporter, including transport of monocarboxylates (short-chain fatty acids including L-lactate, D-lactate, pyruvate, acetate, propionate, valerate and butyrate), mocarboxylate drugs (nicotinate, benzoate, salicylate and 5-aminosalicylate) and ketone bodies (beta-D-hydroxybutyrate, acetoacetate and alpha-ketoisocaproate), with a Na(+):substrate stoichiometry of between 4:1 and 2:1. Catalyzes passive carrier mediated diffusion of iodide. Mediates iodide transport from the thyrocyte into the colloid lumen through the apical membrane. May be responsible for the absorption of D-lactate and monocarboxylate drugs from the intestinal tract. Acts as a tumor suppressor, suppressing colony formation in colon cancer, prostate cancer and glioma cell lines. May play a critical role in the entry of L-lactate and ketone bodies into neurons by a process driven by an electrochemical Na(+) gradient and hence contribute to the maintenance of the energy status and function of neurons. Mediates sodium-coupled electrogenic transport of pyroglutamate (5-oxo-L-proline). Can mediate the transport of chloride, bromide, iodide and nitrate ions when the external concentration of sodium ions is reduced. The protein is Sodium-coupled monocarboxylate transporter 1 of Homo sapiens (Human).